The primary structure comprises 255 residues: Imidazole glycerol phosphate synthase subunit HisF (255 aa).

Residues Asp-12 and Asp-131 contribute to the active site.

This sequence belongs to the HisA/HisF family. As to quaternary structure, heterodimer of HisH and HisF.

It is found in the cytoplasm. It catalyses the reaction 5-[(5-phospho-1-deoxy-D-ribulos-1-ylimino)methylamino]-1-(5-phospho-beta-D-ribosyl)imidazole-4-carboxamide + L-glutamine = D-erythro-1-(imidazol-4-yl)glycerol 3-phosphate + 5-amino-1-(5-phospho-beta-D-ribosyl)imidazole-4-carboxamide + L-glutamate + H(+). The protein operates within amino-acid biosynthesis; L-histidine biosynthesis; L-histidine from 5-phospho-alpha-D-ribose 1-diphosphate: step 5/9. Functionally, IGPS catalyzes the conversion of PRFAR and glutamine to IGP, AICAR and glutamate. The HisF subunit catalyzes the cyclization activity that produces IGP and AICAR from PRFAR using the ammonia provided by the HisH subunit. This Neisseria meningitidis serogroup C / serotype 2a (strain ATCC 700532 / DSM 15464 / FAM18) protein is Imidazole glycerol phosphate synthase subunit HisF.